We begin with the raw amino-acid sequence, 898 residues long: DNA topoisomerase 1 (898 aa).

Residues 2–126 (SKLVIVESPT…IKRMVFHEIT (125 aa)) enclose the Toprim domain. Mg(2+) contacts are provided by Glu-8 and Asp-95. In terms of domain architecture, Topo IA-type catalytic spans 141–583 (DENLVHAQET…GFFLGESGLE (443 aa)). The interaction with DNA stretch occupies residues 175-180 (SAGRVQ). Tyr-320 (O-(5'-phospho-DNA)-tyrosine intermediate) is an active-site residue. A disordered region spans residues 840–898 (AEKAGSGKKTSRKKATTTAKGTKKTTSKKASATGTAKKTTTKRTTRKKAASPDQSSEAG). Over residues 848-866 (KTSRKKATTTAKGTKKTTS) the composition is skewed to basic residues. Residues 867–877 (KKASATGTAKK) show a composition bias toward low complexity. Positions 878–888 (TTTKRTTRKKA) are enriched in basic residues.

The protein belongs to the type IA topoisomerase family. Monomer. Mg(2+) is required as a cofactor.

The enzyme catalyses ATP-independent breakage of single-stranded DNA, followed by passage and rejoining.. Functionally, releases the supercoiling and torsional tension of DNA, which is introduced during the DNA replication and transcription, by transiently cleaving and rejoining one strand of the DNA duplex. Introduces a single-strand break via transesterification at a target site in duplex DNA. The scissile phosphodiester is attacked by the catalytic tyrosine of the enzyme, resulting in the formation of a DNA-(5'-phosphotyrosyl)-enzyme intermediate and the expulsion of a 3'-OH DNA strand. The free DNA strand then undergoes passage around the unbroken strand, thus removing DNA supercoils. Finally, in the religation step, the DNA 3'-OH attacks the covalent intermediate to expel the active-site tyrosine and restore the DNA phosphodiester backbone. In Synechocystis sp. (strain ATCC 27184 / PCC 6803 / Kazusa), this protein is DNA topoisomerase 1.